Here is a 576-residue protein sequence, read N- to C-terminus: Apolipoprotein N-acyltransferase 1 (576 aa).

A run of 7 helical transmembrane segments spans residues 15–35, 38–58, 60–80, 92–112, 128–148, 168–188, and 204–224; these read LILCFGIGIGTVFGLSPFSFF, GVFASISCIFLFFSLNRTSIW, AFLWLLILSQILNFTAFYWIP, FVSILFFFLYGLISHLKFFLF, YILLIFPAAGTLSDMITFQIF, ICGVYGLSFLLLFISSTFLIL, and IASLICITFIYGFGLYRIGYI. One can recognise a CN hydrolase domain in the interval 236 to 538; it reads LSVLMIQPDT…TGTRAFSIRL (303 aa). E285 functions as the Proton acceptor in the catalytic mechanism. Residue K355 is part of the active site. C446 (nucleophile) is an active-site residue. Residues 549-569 traverse the membrane as a helical segment; that stretch reads FGNSFLWIFCILILISRLIFV.

The protein belongs to the CN hydrolase family. Apolipoprotein N-acyltransferase subfamily.

It is found in the cell inner membrane. The catalysed reaction is N-terminal S-1,2-diacyl-sn-glyceryl-L-cysteinyl-[lipoprotein] + a glycerophospholipid = N-acyl-S-1,2-diacyl-sn-glyceryl-L-cysteinyl-[lipoprotein] + a 2-acyl-sn-glycero-3-phospholipid + H(+). It functions in the pathway protein modification; lipoprotein biosynthesis (N-acyl transfer). Its function is as follows. Catalyzes the phospholipid dependent N-acylation of the N-terminal cysteine of apolipoprotein, the last step in lipoprotein maturation. The protein is Apolipoprotein N-acyltransferase 1 of Leptospira interrogans serogroup Icterohaemorrhagiae serovar Lai (strain 56601).